A 397-amino-acid chain; its full sequence is uncharacterized protein (397 aa).

9 consecutive transmembrane segments (helical) span residues M1 to V21, V39 to F59, E76 to P96, V103 to A123, A124 to A144, M194 to F214, A219 to L239, L255 to L275, and Q301 to A321.

The protein belongs to the TerC family.

It localises to the cell membrane. This is an uncharacterized protein from Mycobacterium bovis (strain ATCC BAA-935 / AF2122/97).